We begin with the raw amino-acid sequence, 435 residues long: ATP-dependent protease ATPase subunit HslU (435 aa).

Residues I18, 60–65 (GVGKTE), D248, E313, and R385 each bind ATP.

Belongs to the ClpX chaperone family. HslU subfamily. In terms of assembly, a double ring-shaped homohexamer of HslV is capped on each side by a ring-shaped HslU homohexamer. The assembly of the HslU/HslV complex is dependent on binding of ATP.

The protein localises to the cytoplasm. ATPase subunit of a proteasome-like degradation complex; this subunit has chaperone activity. The binding of ATP and its subsequent hydrolysis by HslU are essential for unfolding of protein substrates subsequently hydrolyzed by HslV. HslU recognizes the N-terminal part of its protein substrates and unfolds these before they are guided to HslV for hydrolysis. This is ATP-dependent protease ATPase subunit HslU from Rhizobium johnstonii (strain DSM 114642 / LMG 32736 / 3841) (Rhizobium leguminosarum bv. viciae).